Reading from the N-terminus, the 1066-residue chain is MDEEFENDFPYKVMLNQQQDPSDAQSSPTFVPSANPSLTTPWLQTTPSANRPTWLPLQQHMHQLRHTGLLPAVESSFVHGHRRSASAGVGMGNFSNQATIPSNSPAVSNMQPPTQGGQPLYPTNFFTTSVSASSDSFPNSPTVPSKFSLNPSVATSTNISPRRHAKSHSVASVSSPNSHNAVPFTPHAFVPPVNNASPLPALNTLPQLLRPRNLDAQWRPSSLSQTNSPTHAANPSFPGTIVTHNTSNFRPEGGGHRHRRSTGSLSVGSSGSGFSSGGSGNPRKNLFSPYLPQSSIPALLAERRLVTGILIVSKKNRSDAFVSVDGLDAEVFICGSKDRNRALEGDVVAIELLDVDEVWAGKLEKEENRRRKDPISTRGSFDNLRIDAVPFEVPQRSAIKARDDEQVEGQTLFLLDQKQLGADEKPKYAGHVVAVLQRAPGQVFSGTLGILRPSSAANKERQTSSGNQGSSNNSGNDKPKIVWFKPSDKRVPLIAIPTEQAPTDFLGNDQAYAQRLFLASIKRWPVTSLHPFGMLVGELGSMDSMSAQVSALLHDTGVHSEPWEGSAATSAVTALNALSDNFLNVAGCADYRSEDVFLFVKNDVSKAAVSEVKQHESNINSSSATDFVSSAFHIRPTSTGYHVGIHVTDVSRVIEPGSPLDRELQRRSIAVNLCQKSVPLFPTTLGEALSLREDKDCYTMSLLLDVSSTGKIRGTWIGWAVIRPRKAYTMKEADELLQTDARLRLFHTVSSRLRTHHLGTDVPLSRYCRLVRRWDEESCSFDPNETNLFISSAVEVLRETLLDAANRAVASHLRQEFRENAFLRTQRLPSRENCRILQSMAIQMGCVLDLSSTKSLLRSLSLIEDDTVRNILQLYYYKVTPRAVYEMQKYKGNLASQMMSLGIEDESDDLTHFTAPLERYGDIVVHYQLQLLLRGELASEKRLRVWSQAANDASRRLVISKFAQETSIHIKIFSDWAESQVWQDGLVCFVAPSYFDVFFPSLGMEKRVHLDLLNLTHVRFEEDQGILSLYDESGAVTVVKLLTSVKVKLFVQLSTPPLINVSNVEF.

Over residues 18–28 (QQDPSDAQSSP) the composition is skewed to low complexity. Disordered stretches follow at residues 18 to 40 (QQDP…SLTT), 154 to 178 (ATST…SPNS), and 247 to 286 (SNFR…RKNL). Polar residues predominate over residues 29–40 (TFVPSANPSLTT). Residue T157 is modified to Phosphothreonine. The segment covering 168 to 178 (HSVASVSSPNS) has biased composition (low complexity). T262 carries the post-translational modification Phosphothreonine. Residue S264 is modified to Phosphoserine. A compositionally biased stretch (gly residues) spans 270-280 (SGSGFSSGGSG). T377 is subject to Phosphothreonine. Positions 454-480 (SSAANKERQTSSGNQGSSNNSGNDKPK) are disordered. Residues 464 to 476 (SSGNQGSSNNSGN) show a composition bias toward low complexity. The 75-residue stretch at 482-556 (VWFKPSDKRV…AQVSALLHDT (75 aa)) folds into the CSD2 domain. An RNB domain is found at 618-934 (NINSSSATDF…VHYQLQLLLR (317 aa)). The DIS3L2 C-terminal domain occupies 983–1033 (QDGLVCFVAPSYFDVFFPSLGMEKRVHLDLLNLTHVRFEEDQGILSLYDES).

Belongs to the RNR ribonuclease family. As to quaternary structure, interacts with serine/threonine phosphatase ppe1, protein kinase C and an osmosensing MAP kinase.

The protein localises to the cytoplasm. Functionally, required for the maintenance of cell shape during interphase. Required for localization of cortical actin to the growing tips before mitosis. This is Protein sts5 (sts5) from Schizosaccharomyces pombe (strain 972 / ATCC 24843) (Fission yeast).